The primary structure comprises 154 residues: Large ribosomal subunit protein uL13 (154 aa).

Positions 132–154 (PHEAQQPETLDVGAMNRKNKRAA) are disordered.

The protein belongs to the universal ribosomal protein uL13 family. As to quaternary structure, part of the 50S ribosomal subunit.

In terms of biological role, this protein is one of the early assembly proteins of the 50S ribosomal subunit, although it is not seen to bind rRNA by itself. It is important during the early stages of 50S assembly. This Rhodopseudomonas palustris (strain HaA2) protein is Large ribosomal subunit protein uL13.